We begin with the raw amino-acid sequence, 300 residues long: Transcription initiation factor IIB (300 aa).

The TFIIB-type zinc-finger motif lies at 3-34; the sequence is KQRVCPVCGSTEFIYDPERGEIVCARCGYVIE. Zn(2+) contacts are provided by Cys-7, Cys-10, Cys-26, and Cys-29. 2 consecutive repeat copies span residues 114–197 and 210–291.

The protein belongs to the TFIIB family.

Stabilizes TBP binding to an archaeal box-A promoter. Also responsible for recruiting RNA polymerase II to the pre-initiation complex (DNA-TBP-TFIIB). The protein is Transcription initiation factor IIB of Pyrococcus abyssi (strain GE5 / Orsay).